The primary structure comprises 413 residues: Divalent metal cation transporter MntH (413 aa).

A run of 11 helical transmembrane segments spans residues 19–39, 46–66, 94–114, 122–142, 156–176, 196–216, 241–261, 290–310, 329–349, 350–370, and 389–409; these read LALM…GNFA, ASFG…AMLI, VWFY…AEFI, LVLG…TFLI, VIGG…IFSQ, AVFL…IYLH, IAMT…AAAF, IFGL…TLAG, AITM…TRIL, VMSQ…LLIF, and IGWA…VGSL.

Belongs to the NRAMP family.

The protein localises to the cell inner membrane. In terms of biological role, h(+)-stimulated, divalent metal cation uptake system. The polypeptide is Divalent metal cation transporter MntH (Klebsiella pneumoniae subsp. pneumoniae (strain ATCC 700721 / MGH 78578)).